The chain runs to 437 residues: Chaperone SurA (437 aa).

The first 22 residues, 1–22 (MKNWKFPLISTLLLLLTINVHA), serve as a signal peptide directing secretion. 2 consecutive PpiC domains span residues 173 to 274 (TVQY…KIDD) and 283 to 383 (VTEV…EVLE).

Its subcellular location is the periplasm. It carries out the reaction [protein]-peptidylproline (omega=180) = [protein]-peptidylproline (omega=0). Its function is as follows. Chaperone involved in the correct folding and assembly of outer membrane proteins. Recognizes specific patterns of aromatic residues and the orientation of their side chains, which are found more frequently in integral outer membrane proteins. May act in both early periplasmic and late outer membrane-associated steps of protein maturation. The chain is Chaperone SurA from Aliivibrio fischeri (strain ATCC 700601 / ES114) (Vibrio fischeri).